A 227-amino-acid polypeptide reads, in one-letter code: UPF0758 protein Pcar_0065 (227 aa).

The 123-residue stretch at 105–227 (RYTSPQAVFA…YVSLADRGVL (123 aa)) folds into the MPN domain. Residues His-176, His-178, and Asp-189 each coordinate Zn(2+). The JAMM motif signature appears at 176-189 (HNHPSGDPSPSRED).

It belongs to the UPF0758 family.

This is UPF0758 protein Pcar_0065 from Syntrophotalea carbinolica (strain DSM 2380 / NBRC 103641 / GraBd1) (Pelobacter carbinolicus).